Consider the following 409-residue polypeptide: Tyrosine--tRNA ligase (409 aa).

Positions 43 to 52 (PTAPDLHLGH) match the 'HIGH' region motif. The short motif at 227 to 231 (KMSKS) is the 'KMSKS' region element. ATP is bound at residue K230. One can recognise an S4 RNA-binding domain in the interval 338–399 (LALPQLLKLA…GKRKFAKVTL (62 aa)).

This sequence belongs to the class-I aminoacyl-tRNA synthetase family. TyrS type 2 subfamily. In terms of assembly, homodimer.

The protein localises to the cytoplasm. The catalysed reaction is tRNA(Tyr) + L-tyrosine + ATP = L-tyrosyl-tRNA(Tyr) + AMP + diphosphate + H(+). In terms of biological role, catalyzes the attachment of tyrosine to tRNA(Tyr) in a two-step reaction: tyrosine is first activated by ATP to form Tyr-AMP and then transferred to the acceptor end of tRNA(Tyr). This chain is Tyrosine--tRNA ligase, found in Nitrosomonas europaea (strain ATCC 19718 / CIP 103999 / KCTC 2705 / NBRC 14298).